The sequence spans 407 residues: Phosphopentomutase (407 aa).

Aspartate 10, aspartate 306, histidine 311, aspartate 347, histidine 348, and histidine 359 together coordinate Mn(2+).

It belongs to the phosphopentomutase family. Mn(2+) is required as a cofactor.

It localises to the cytoplasm. The catalysed reaction is 2-deoxy-alpha-D-ribose 1-phosphate = 2-deoxy-D-ribose 5-phosphate. It carries out the reaction alpha-D-ribose 1-phosphate = D-ribose 5-phosphate. It participates in carbohydrate degradation; 2-deoxy-D-ribose 1-phosphate degradation; D-glyceraldehyde 3-phosphate and acetaldehyde from 2-deoxy-alpha-D-ribose 1-phosphate: step 1/2. In terms of biological role, isomerase that catalyzes the conversion of deoxy-ribose 1-phosphate (dRib-1-P) and ribose 1-phosphate (Rib-1-P) to deoxy-ribose 5-phosphate (dRib-5-P) and ribose 5-phosphate (Rib-5-P), respectively. The protein is Phosphopentomutase of Escherichia coli O127:H6 (strain E2348/69 / EPEC).